The chain runs to 189 residues: Threonylcarbamoyl-AMP synthase (189 aa).

The 184-residue stretch at 6–189 (SPAFESVLTA…ALTGELYRQG (184 aa)) folds into the YrdC-like domain.

It belongs to the SUA5 family. TsaC subfamily.

It is found in the cytoplasm. The enzyme catalyses L-threonine + hydrogencarbonate + ATP = L-threonylcarbamoyladenylate + diphosphate + H2O. Its function is as follows. Required for the formation of a threonylcarbamoyl group on adenosine at position 37 (t(6)A37) in tRNAs that read codons beginning with adenine. Catalyzes the conversion of L-threonine, HCO(3)(-)/CO(2) and ATP to give threonylcarbamoyl-AMP (TC-AMP) as the acyladenylate intermediate, with the release of diphosphate. In Photorhabdus laumondii subsp. laumondii (strain DSM 15139 / CIP 105565 / TT01) (Photorhabdus luminescens subsp. laumondii), this protein is Threonylcarbamoyl-AMP synthase.